The chain runs to 480 residues: Glycogen synthase 1 (480 aa).

Lys15 lines the ADP-alpha-D-glucose pocket.

The protein belongs to the glycosyltransferase 1 family. Bacterial/plant glycogen synthase subfamily.

It carries out the reaction [(1-&gt;4)-alpha-D-glucosyl](n) + ADP-alpha-D-glucose = [(1-&gt;4)-alpha-D-glucosyl](n+1) + ADP + H(+). The protein operates within glycan biosynthesis; glycogen biosynthesis. Its function is as follows. Synthesizes alpha-1,4-glucan chains using ADP-glucose. In Rhizobium meliloti (strain 1021) (Ensifer meliloti), this protein is Glycogen synthase 1 (glgA1).